The primary structure comprises 461 residues: MLKIFNTLTRQKEEFKPIHAGEVGMYVCGITVYDLCHIGHGRTFVAFDVVARYLRFLGYKLKYVRNITDIDDKIIKRANENGESFVALVDRMIAEMHKDFDALNILRPDMEPRATHHIAEIIELTEQLIAKGHAYVADNGDVMFDVPTDPTYGVLSRQDLDQLQAGARVDVVDDKRNRMDFVLWKMSKEGEPSWPSPWGAGRPGWHIECSAMNCKQLGNHFDIHGGGSDLMFPHHENEIAQSTCAHDGQYVNYWMHSGMVMVDREKMSKSLGNFFTVRDVLKYYDAETVRYFLMSGHYRSQLNYSEENLKQARAALERLYTALRGTDKTVAPAGGEAFEARFIEAMDDDFNTPEAYSVLFDMAREVNRLKAEDMAAANAMASHLRKLSAVLGLLEQEPEAFLQSGAQADDSEVAEIEALIQQRLDARKAKDWAAADAARDRLNEMGIVLEDGPQGTTWRRK.

C28 provides a ligand contact to Zn(2+). Residues 30-40 (ITVYDLCHIGH) carry the 'HIGH' region motif. 3 residues coordinate Zn(2+): C209, H234, and E238. The short motif at 266–270 (KMSKS) is the 'KMSKS' region element. K269 provides a ligand contact to ATP.

The protein belongs to the class-I aminoacyl-tRNA synthetase family. As to quaternary structure, monomer. Zn(2+) is required as a cofactor.

The protein localises to the cytoplasm. The enzyme catalyses tRNA(Cys) + L-cysteine + ATP = L-cysteinyl-tRNA(Cys) + AMP + diphosphate. The sequence is that of Cysteine--tRNA ligase from Shigella flexneri.